We begin with the raw amino-acid sequence, 476 residues long: UDP-N-acetylmuramate--L-alanine ligase (476 aa).

ATP is bound at residue 123-129 (GTHGKTT).

This sequence belongs to the MurCDEF family.

It localises to the cytoplasm. It carries out the reaction UDP-N-acetyl-alpha-D-muramate + L-alanine + ATP = UDP-N-acetyl-alpha-D-muramoyl-L-alanine + ADP + phosphate + H(+). It participates in cell wall biogenesis; peptidoglycan biosynthesis. Cell wall formation. In Nitrosococcus oceani (strain ATCC 19707 / BCRC 17464 / JCM 30415 / NCIMB 11848 / C-107), this protein is UDP-N-acetylmuramate--L-alanine ligase.